The primary structure comprises 977 residues: Short transient receptor potential channel 4 (977 aa).

The Cytoplasmic segment spans residues 1-324 (MAQFYYKRNV…YDEFPGWRRR (324 aa)). ANK repeat units lie at residues 29 to 60 (LSPS…IYFK), 71 to 93 (RTAL…LSFN), 96 to 118 (VGDA…LLNH), and 141 to 165 (PDIT…VQKG). Positions 172, 176, 178, and 181 each coordinate Zn(2+). Residues 223–260 (LSWELQELSKVENEFKSEYEELSRQCKQFAKDLLDQTR) adopt a coiled-coil conformation. Residues 325 to 359 (HWAVKMVTCFIIGLLFPVFSVCYLIAPKSPLGLFI) constitute an intramembrane region (discontinuously helical). Topologically, residues 360–362 (RKP) are cytoplasmic. Residues 363-383 (FIKFICHTASYLTFLFLLLLA) form a helical membrane-spanning segment. The Extracellular segment spans residues 384–403 (SQHIDRSDLNRQGPPPTIVE). Residues 404–418 (WMILPWVLGFIWGEI) form a helical membrane-spanning segment. 4 residues coordinate Ca(2+): E417, Q420, N435, and D438. The Cytoplasmic segment spans residues 419–432 (KQMWDGGLQDYIHD). A helical transmembrane segment spans residues 433 to 453 (WWNLMDFVMNSLYLATISLKI). Topologically, residues 454–475 (VAFVKYSALNPRESWDMWHPTL) are extracellular. Residues 476–498 (VAEALFAIANIFSSLRLISLFTA) traverse the membrane as a helical segment. Residues 499 to 511 (NSHLGPLQISLGR) are Cytoplasmic-facing. Residues 512–534 (MLLDILKFLFIYCLVLLAFANGL) traverse the membrane as a helical segment. Topologically, residues 535 to 599 (NQLYFYYEET…HEFTDFVGAT (65 aa)) are extracellular. A disulfide bond links C549 and C554. Residues 600–620 (MFGTYNVISLVVLLNMLIAMM) traverse the membrane as a helical segment. The segment at 615–977 (MLIAMMNNSY…AHEDYVTTRL (363 aa)) is interaction with ITPR1, ITPR2 and ITPR3. At 621–977 (NNSYQLIADH…AHEDYVTTRL (357 aa)) the chain is on the cytoplasmic side. A disordered region spans residues 767-790 (AASSASSADSDEKSHSEGNGKDKR). Residues 776 to 787 (SDEKSHSEGNGK) are compositionally biased toward basic and acidic residues. 2 positions are modified to phosphotyrosine; by FYN: Y959 and Y972. The interval 975-977 (TRL) is PDZ-binding domain.

This sequence belongs to the transient receptor (TC 1.A.4) family. STrpC subfamily. TRPC4 sub-subfamily. Homotetramer. Heterotetramer with TRPC1 and/or TRPC5. Forms a heteromeric ion channel with TRPC1, with a 1:3 TRPC1:TRPC4 stoichiometry. Interacts with TRPC4AP. Isoform alpha but not isoform beta interacts with ITPR1, ITPR2 and ITPR3. Interacts with NHERF1. Interacts with MX1 and RNF24. Interacts (via CIRB domain) with SESTD1 (via the spectrin 1 repeat) and SPTBN5 (via C-terminus). Interacts with CDH5 and CTNNB1. Interacts (via protein 4.1-binding domain) with EPB41L2. Interacts with PLSCR1.

The protein resides in the cell membrane. The enzyme catalyses Ca(2+)(in) = Ca(2+)(out). It carries out the reaction Na(+)(in) = Na(+)(out). The catalysed reaction is Li(+)(in) = Li(+)(out). It catalyses the reaction Cs(+)(in) = Cs(+)(out). Its activity is regulated as follows. May be operated by a phosphatidylinositol second messenger system activated by receptor tyrosine kinases or G-protein coupled receptors. May be activated by intracellular calcium store depletion. Forms a receptor-activated non-selective calcium permeant cation channel. Acts as a cell-cell contact-dependent endothelial calcium entry channel. Forms a homomeric ion channel or a heteromeric ion channel with TRPC1; the heteromeric ion channel has reduced calcium permeability compared to the homomeric channel. Also permeable to monovalent ions including sodium, lithium and cesium ions. In terms of biological role, forms a non-selective a receptor-activated calcium permeant cation channel. Probably is operated by a phosphatidylinositol second messenger system activated by receptor tyrosine kinases or G-protein coupled receptors. In Rattus norvegicus (Rat), this protein is Short transient receptor potential channel 4 (Trpc4).